Reading from the N-terminus, the 269-residue chain is Expansin-B11 (269 aa).

A signal peptide spans 1–30 (MTVVSIMWSLVQVQVLVAVALAFLVGGAWC). Asn-40 carries an N-linked (GlcNAc...) asparagine glycan. Residues 69 to 175 (GGGCGYKDVN…RRVKCKYGSK (107 aa)) enclose the Expansin-like EG45 domain. Intrachain disulfides connect Cys-72/Cys-100, Cys-103/Cys-170, and Cys-108/Cys-114. The region spanning 187 to 268 (NYLALLVKYV…GWKPNTAYTA (82 aa)) is the Expansin-like CBD domain.

It belongs to the expansin family. Expansin B subfamily. As to expression, expressed in pollen.

It localises to the secreted. The protein localises to the cell wall. The protein resides in the membrane. Its function is as follows. May aid fertilization by loosening the cell wall of the stigma and style, thereby facilitating penetration of the pollen tube. Acts selectively on grass cell walls, which are relatively poor in pectins and xyloglucans and rich in glucuronoarabinoxylans and (1-3),(1-4)-beta-D-glucans, when compared with cell walls of other angiosperms, including other monocots. This is Expansin-B11 (EXPB11) from Zea mays (Maize).